Here is a 472-residue protein sequence, read N- to C-terminus: Argininosuccinate lyase (472 aa).

The protein belongs to the lyase 1 family. Argininosuccinate lyase subfamily.

The protein resides in the cytoplasm. The enzyme catalyses 2-(N(omega)-L-arginino)succinate = fumarate + L-arginine. It participates in amino-acid biosynthesis; L-arginine biosynthesis; L-arginine from L-ornithine and carbamoyl phosphate: step 3/3. This is Argininosuccinate lyase from Polynucleobacter asymbioticus (strain DSM 18221 / CIP 109841 / QLW-P1DMWA-1) (Polynucleobacter necessarius subsp. asymbioticus).